Consider the following 290-residue polypeptide: Small ribosomal subunit protein uS11 (290 aa).

The disordered stretch occupies residues aspartate 243–alanine 271. Over residues tryptophan 257–alanine 271 the composition is skewed to low complexity.

The protein belongs to the universal ribosomal protein uS2 family. Component of the small ribosomal subunit (SSU). Mature N.crassa ribosomes consist of a small (40S) and a large (60S) subunit. The 40S small subunit contains 1 molecule of ribosomal RNA (18S rRNA) and at least 32 different proteins. The large 60S subunit contains 3 rRNA molecules (26S, 5.8S and 5S rRNA) and at least 42 different proteins. Interacts with rps21.

Its subcellular location is the cytoplasm. In terms of biological role, component of the ribosome, a large ribonucleoprotein complex responsible for the synthesis of proteins in the cell. The small ribosomal subunit (SSU) binds messenger RNAs (mRNAs) and translates the encoded message by selecting cognate aminoacyl-transfer RNA (tRNA) molecules. The large subunit (LSU) contains the ribosomal catalytic site termed the peptidyl transferase center (PTC), which catalyzes the formation of peptide bonds, thereby polymerizing the amino acids delivered by tRNAs into a polypeptide chain. The nascent polypeptides leave the ribosome through a tunnel in the LSU and interact with protein factors that function in enzymatic processing, targeting, and the membrane insertion of nascent chains at the exit of the ribosomal tunnel. uS2 is required for the assembly and/or stability of the 40S ribosomal subunit. Required for the processing of the 20S rRNA-precursor to mature 18S rRNA in a late step of the maturation of 40S ribosomal subunits. This Neurospora crassa (strain ATCC 24698 / 74-OR23-1A / CBS 708.71 / DSM 1257 / FGSC 987) protein is Small ribosomal subunit protein uS11.